The sequence spans 1124 residues: Anillin (1124 aa).

Residue Met-1 is modified to N-acetylmethionine. The span at 1–25 (MDPFTEKLLERTRARRENLQRKMAE) shows a compositional bias: basic and acidic residues. Positions 1 to 45 (MDPFTEKLLERTRARRENLQRKMAERPTAAPRSMTHAKRARQPLS) are required for ubiquitination. Disordered stretches follow at residues 1 to 113 (MDPF…ADTI) and 136 to 196 (ATAA…ATPV). The tract at residues 1–155 (MDPFTEKLLE…MQKLAEQRRR (155 aa)) is interaction with CD2AP. The nuclear localization stretch occupies residues 1-230 (MDPFTEKLLE…AKQNSVQEQP (230 aa)). Residues Ser-54 and Ser-72 each carry the phosphoserine modification. Positions 77–96 (VEVSNLENKQPVESTSAKSC) are enriched in polar residues. 2 positions are modified to phosphoserine: Ser-97 and Ser-102. Low complexity predominate over residues 97–108 (SPSPVSPQVQPQ). Over residues 148-158 (KLAEQRRRWDN) the composition is skewed to basic and acidic residues. Residues Ser-172 and Ser-182 each carry the phosphoserine modification. Phosphothreonine is present on Thr-194. Ser-225 and Ser-252 each carry phosphoserine. The tract at residues 231–676 (GTACLSKFSS…RDLLYSIDAY (446 aa)) is interaction with F-actin. Lys-254 participates in a covalent cross-link: Glycyl lysine isopeptide (Lys-Gly) (interchain with G-Cter in SUMO1). The residue at position 261 (Ser-261) is a Phosphoserine. A compositionally biased stretch (polar residues) spans 294–305 (TSPVKSTTSITD). Residues 294 to 328 (TSPVKSTTSITDAKSCEGQNPELLPKTPISPLKTG) are disordered. A Phosphothreonine modification is found at Thr-320. Residues Ser-323 and Ser-339 each carry the phosphoserine modification. Thr-364 carries the post-translational modification Phosphothreonine. Lys-371 carries the post-translational modification N6-acetyllysine. Basic and acidic residues predominate over residues 380–389 (RCQEHSKESP). Residues 380–399 (RCQEHSKESPARSTPHRTPI) form a disordered region. Thr-397 and Thr-401 each carry phosphothreonine. 7 positions are modified to phosphoserine: Ser-417, Ser-419, Ser-449, Ser-485, Ser-518, Ser-553, and Ser-561. Residues 569 to 604 (FSDVLEEGELDMEKSQEEMDQALAESSEEQEDALNI) are a coiled coil. 2 disordered regions span residues 579–600 (DMEKSQEEMDQALAESSEEQED) and 625–664 (LVSTPRLELKDTSRSDESPKPGKFQRTRVPRAESGDSLGS). Composition is skewed to basic and acidic residues over residues 631–644 (LELKDTSRSDESPK) and 654–664 (PRAESGDSLGS). Ser-637, Ser-642, Ser-658, Ser-661, and Ser-664 each carry phosphoserine. Tyr-671 carries the post-translational modification Phosphotyrosine. Residues Ser-678, Ser-688, Ser-792, and Ser-927 each carry the phosphoserine modification. The segment at 730–1124 (QQTVIYQASQ…DACYKPIGKP (395 aa)) is localization to the cleavage furrow. Residues 983–1107 (SVEERGFLTI…WMQKLNQVLV (125 aa)) form the PH domain.

In terms of assembly, interacts with F-actin. Interacts with CD2AP. May interact with RHOA. Interacts with FZR1/CDH1 during mitotic exit. Post-translationally, phosphorylated during mitosis. Ubiquitinated, and this requires FZR1/CDH1. In terms of tissue distribution, ubiquitously expressed. Present at highest levels in the brain, at high levels in the placenta and testis, at intermediate levels in the intestine, ovary, skeletal muscle and thymus and at lower levels in heart, kidney, liver, lung, pancreas, prostate and spleen. In the kidney, it is widely expressed in tubules, but sparsely expressed in the glomerulus. Expression is significantly increased in renal biopsy specimens from idiopathic FSGS. Overexpressed in many tumor types including breast, colorectal, endometrial, hepatic, kidney, lung, ovarian and pancreatic tumors.

The protein localises to the nucleus. The protein resides in the cytoplasm. It is found in the cytoskeleton. It localises to the cell cortex. Its subcellular location is the cell projection. The protein localises to the bleb. Functionally, required for cytokinesis. Essential for the structural integrity of the cleavage furrow and for completion of cleavage furrow ingression. Plays a role in bleb assembly during metaphase and anaphase of mitosis. May play a significant role in podocyte cell migration. The polypeptide is Anillin (ANLN) (Homo sapiens (Human)).